We begin with the raw amino-acid sequence, 294 residues long: UDP-N-acetylenolpyruvoylglucosamine reductase (294 aa).

The FAD-binding PCMH-type domain occupies V26–S189. The active site involves R169. Catalysis depends on C218, which acts as the Proton donor. E288 is an active-site residue.

The protein belongs to the MurB family. It depends on FAD as a cofactor.

The protein resides in the cytoplasm. It carries out the reaction UDP-N-acetyl-alpha-D-muramate + NADP(+) = UDP-N-acetyl-3-O-(1-carboxyvinyl)-alpha-D-glucosamine + NADPH + H(+). It functions in the pathway cell wall biogenesis; peptidoglycan biosynthesis. In terms of biological role, cell wall formation. This is UDP-N-acetylenolpyruvoylglucosamine reductase from Wolbachia pipientis subsp. Culex pipiens (strain wPip).